Reading from the N-terminus, the 281-residue chain is Large ribosomal subunit protein uL2 (281 aa).

2 disordered regions span residues 1 to 23 (MAVK…DYSK) and 224 to 281 (RGSV…KDSK). Residues 12–23 (GRRNMSSLDYSK) are compositionally biased toward polar residues. The segment covering 261–281 (KTRKTKKSSTKLILRRRKDSK) has biased composition (basic residues).

This sequence belongs to the universal ribosomal protein uL2 family. Part of the 50S ribosomal subunit. Forms a bridge to the 30S subunit in the 70S ribosome.

One of the primary rRNA binding proteins. Required for association of the 30S and 50S subunits to form the 70S ribosome, for tRNA binding and peptide bond formation. It has been suggested to have peptidyltransferase activity; this is somewhat controversial. Makes several contacts with the 16S rRNA in the 70S ribosome. In Mycoplasmopsis agalactiae (strain NCTC 10123 / CIP 59.7 / PG2) (Mycoplasma agalactiae), this protein is Large ribosomal subunit protein uL2.